A 92-amino-acid polypeptide reads, in one-letter code: Probable Fe(2+)-trafficking protein (92 aa).

The protein belongs to the Fe(2+)-trafficking protein family.

Functionally, could be a mediator in iron transactions between iron acquisition and iron-requiring processes, such as synthesis and/or repair of Fe-S clusters in biosynthetic enzymes. This Shewanella loihica (strain ATCC BAA-1088 / PV-4) protein is Probable Fe(2+)-trafficking protein.